Reading from the N-terminus, the 527-residue chain is Peptide chain release factor 3 (527 aa).

In terms of domain architecture, tr-type G spans 9-277; it reads AKRRTFAIIS…AVVDWAPRPL (269 aa). GTP-binding positions include 18 to 25, 86 to 90, and 140 to 143; these read SHPDAGKT, DTPGH, and NKLD.

The protein belongs to the TRAFAC class translation factor GTPase superfamily. Classic translation factor GTPase family. PrfC subfamily.

It localises to the cytoplasm. Its function is as follows. Increases the formation of ribosomal termination complexes and stimulates activities of RF-1 and RF-2. It binds guanine nucleotides and has strong preference for UGA stop codons. It may interact directly with the ribosome. The stimulation of RF-1 and RF-2 is significantly reduced by GTP and GDP, but not by GMP. The protein is Peptide chain release factor 3 of Pseudomonas entomophila (strain L48).